We begin with the raw amino-acid sequence, 127 residues long: Large ribosomal subunit protein bL12 (127 aa).

This sequence belongs to the bacterial ribosomal protein bL12 family. Homodimer. Part of the ribosomal stalk of the 50S ribosomal subunit. Forms a multimeric L10(L12)X complex, where L10 forms an elongated spine to which 2 to 4 L12 dimers bind in a sequential fashion. Binds GTP-bound translation factors.

Its function is as follows. Forms part of the ribosomal stalk which helps the ribosome interact with GTP-bound translation factors. Is thus essential for accurate translation. This is Large ribosomal subunit protein bL12 from Nitratiruptor sp. (strain SB155-2).